The following is an 89-amino-acid chain: Putative membrane protein insertion efficiency factor (89 aa).

The protein belongs to the UPF0161 family.

Its subcellular location is the cell inner membrane. Its function is as follows. Could be involved in insertion of integral membrane proteins into the membrane. In Petrotoga mobilis (strain DSM 10674 / SJ95), this protein is Putative membrane protein insertion efficiency factor.